The primary structure comprises 139 residues: ATP synthase epsilon chain, chloroplastic (139 aa).

The protein belongs to the ATPase epsilon chain family. F-type ATPases have 2 components, CF(1) - the catalytic core - and CF(0) - the membrane proton channel. CF(1) has five subunits: alpha(3), beta(3), gamma(1), delta(1), epsilon(1). CF(0) has three main subunits: a, b and c.

Its subcellular location is the plastid. It localises to the chloroplast thylakoid membrane. Its function is as follows. Produces ATP from ADP in the presence of a proton gradient across the membrane. This chain is ATP synthase epsilon chain, chloroplastic, found in Welwitschia mirabilis (Tree tumbo).